A 183-amino-acid chain; its full sequence is ATP-dependent protease subunit HslV (183 aa).

The active site involves threonine 7. Na(+) is bound by residues glycine 162, cysteine 165, and threonine 168.

This sequence belongs to the peptidase T1B family. HslV subfamily. As to quaternary structure, a double ring-shaped homohexamer of HslV is capped on each side by a ring-shaped HslU homohexamer. The assembly of the HslU/HslV complex is dependent on binding of ATP.

It localises to the cytoplasm. The catalysed reaction is ATP-dependent cleavage of peptide bonds with broad specificity.. Allosterically activated by HslU binding. Protease subunit of a proteasome-like degradation complex believed to be a general protein degrading machinery. The protein is ATP-dependent protease subunit HslV of Alkalilimnicola ehrlichii (strain ATCC BAA-1101 / DSM 17681 / MLHE-1).